Here is a 305-residue protein sequence, read N- to C-terminus: Tyrosine recombinase XerC (305 aa).

Residues 2 to 88 enclose the Core-binding (CB) domain; the sequence is TNKQRLVHLF…ALRSFYKFLL (87 aa). The Tyr recombinase domain maps to 109–295; sequence RIPSFLYEEE…SKDSLRKTYM (187 aa). Active-site residues include R149, K173, H247, R250, and H273. The active-site O-(3'-phospho-DNA)-tyrosine intermediate is the Y282.

This sequence belongs to the 'phage' integrase family. XerC subfamily. Forms a cyclic heterotetrameric complex composed of two molecules of XerC and two molecules of XerD.

The protein resides in the cytoplasm. Functionally, site-specific tyrosine recombinase, which acts by catalyzing the cutting and rejoining of the recombining DNA molecules. The XerC-XerD complex is essential to convert dimers of the bacterial chromosome into monomers to permit their segregation at cell division. It also contributes to the segregational stability of plasmids. The chain is Tyrosine recombinase XerC from Bacillus pumilus (strain SAFR-032).